The chain runs to 102 residues: Large ribosomal subunit protein uL24 (102 aa).

This sequence belongs to the universal ribosomal protein uL24 family. Part of the 50S ribosomal subunit.

Its function is as follows. One of two assembly initiator proteins, it binds directly to the 5'-end of the 23S rRNA, where it nucleates assembly of the 50S subunit. In terms of biological role, one of the proteins that surrounds the polypeptide exit tunnel on the outside of the subunit. In Herpetosiphon aurantiacus (strain ATCC 23779 / DSM 785 / 114-95), this protein is Large ribosomal subunit protein uL24.